Consider the following 1105-residue polypeptide: MAAAAGGGGPGTAVGATGSGIAAAAAGLAVYRRKDGGPATKFWESPETVSQLDSVRVWLGKHYKKYVHADAPTNKTLAGLVVQLLQFQEDAFGKHVTNPAFTKLPAKCFMDFKAGGALCHILGAAYKYKNEQGWRRFDLQNPSRMDRNVEMFMNIEKTLVQNNCLTRPNIYLIPDIDLKLANKLKDIIKRHQGTFTDEKSKASHHIYPYSSSQDDEEWLRPVMRKEKQVLVHWGFYPDSYDTWVHSNDVDAEIEDPPIPEKPWKVHVKWILDTDIFNEWMNEEDYEVDENRKPVSFRQRISTKNEEPVRSPERRDRKASANARKRKHSPSPPPPTPTESRKKSGKKGQASLYGKRRSQKEEDEQEDLTKDMEDPTPVPNIEEVVLPKNVNLKKDSENTPVKGGTVADLDEQDEETVTAGGKEDEDPAKGDQSRSVDLGEDNVTEQTNHIIIPSYASWFDYNCIHVIERRALPEFFNGKNKSKTPEIYLAYRNFMIDTYRLNPQEYLTSTACRRNLTGDVCAVMRVHAFLEQWGLVNYQVDPESRPMAMGPPPTPHFNVLADTPSGLVPLHLRSPQVPAAQQMLNFPEKNKEKPVDLQNFGLRTDIYSKKTLAKSKGASAGREWTEQETLLLLEALEMYKDDWNKVSEHVGSRTQDECILHFLRLPIEDPYLENSDASLGPLAYQPVPFSQSGNPVMSTVAFLASVVDPRVASAAAKAALEEFSRVREEVPLELVEAHVKKVQEAARASGKVDPTYGLESSCIAGTGPDEPEKLEGAEEEKMEADPDGQQPEKAENKVENETDEGDKAQDGENEKNSEKEQDSEVSEDTKSEEKETEENKELTDTCKERESDTGKKKVEHEISEGNVATAAAAALASAATKAKHLAAVEERKIKSLVALLVETQMKKLEIKLRHFEELETIMDREKEALEQQRQQLLTERQNFHMEQLKYAELRARQQMEQQQHGQNPQQAHQHSGGPGLAPLGAAGHPGMMPHQQPPPYPLMHHQMPPPHPPQPGQIPGPGSMMPGQHMPGRMIPTVAANIHPSGSGPTPPGMPPMPGNILGPRVPLTAPNGMYPPPPQQQPPPPPPADGVPPPPAPGPPASAAP.

A2 is subject to N-acetylalanine. The interval 28-302 (LAVYRRKDGG…PVSFRQRIST (275 aa)) is marR-like, BRCT and chromo domains module. The 127-residue stretch at 38–164 (PATKFWESPE…IEKTLVQNNC (127 aa)) folds into the MarR-like domain. Residues 168 to 211 (PNIYLIPDIDLKLANKLKDIIKRHQGTFTDEKSKASHHIYPYSS) enclose the BRCT; N-terminus domain. Residue K179 forms a Glycyl lysine isopeptide (Lys-Gly) (interchain with G-Cter in SUMO2) linkage. Residues 217 to 245 (EWLRPVMRKEKQVLVHWGFYPDSYDTWVH) enclose the Chromo domain. The 25-residue stretch at 261–285 (KPWKVHVKWILDTDIFNEWMNEEDY) folds into the BRCT; C-terminus domain. The disordered stretch occupies residues 296 to 439 (FRQRISTKNE…DQSRSVDLGE (144 aa)). The segment covering 302–318 (TKNEEPVRSPERRDRKA) has biased composition (basic and acidic residues). Residues S310, S328, and S330 each carry the phosphoserine modification. Residue T335 is modified to Phosphothreonine. N6-acetyllysine is present on residues K345 and K346. Position 350 is a phosphoserine (S350). At K354 the chain carries N6-acetyllysine. S357 carries the phosphoserine modification. The residue at position 359 (K359) is an N6-acetyllysine; alternate. Residue K359 forms a Glycyl lysine isopeptide (Lys-Gly) (interchain with G-Cter in SUMO2); alternate linkage. T398 carries the phosphothreonine modification. Positions 449–546 (IIIPSYASWF…YQVDPESRPM (98 aa)) constitute an SWIRM domain. Residue S573 is modified to Phosphoserine. K592 participates in a covalent cross-link: Glycyl lysine isopeptide (Lys-Gly) (interchain with G-Cter in SUMO2). The region spanning 618 to 669 (SAGREWTEQETLLLLEALEMYKDDWNKVSEHVGSRTQDECILHFLRLPIEDP) is the SANT domain. A Glycyl lysine isopeptide (Lys-Gly) (interchain with G-Cter in SUMO2) cross-link involves residue K739. The interval 745-860 (ARASGKVDPT…DTGKKKVEHE (116 aa)) is disordered. The segment covering 776–785 (AEEEKMEADP) has biased composition (acidic residues). A compositionally biased stretch (basic and acidic residues) spans 789–860 (QPEKAENKVE…DTGKKKVEHE (72 aa)). K796 participates in a covalent cross-link: Glycyl lysine isopeptide (Lys-Gly) (interchain with G-Cter in SUMO2). A phosphoserine mark is found at S822 and S825. Residues K829 and K856 each participate in a glycyl lysine isopeptide (Lys-Gly) (interchain with G-Cter in SUMO2) cross-link. The stretch at 914–946 (FEELETIMDREKEALEQQRQQLLTERQNFHMEQ) forms a coiled coil. An N6-acetyllysine modification is found at K948. Disordered regions lie at residues 956–1028 (QQME…PGQH) and 1041–1105 (IHPS…SAAP). Positions 957 to 993 (QMEQQQHGQNPQQAHQHSGGPGLAPLGAAGHPGMMPH) are enriched in low complexity. Composition is skewed to pro residues over residues 994–1017 (QQPP…PGQI) and 1048–1057 (PTPPGMPPMP). R1064 carries the asymmetric dimethylarginine modification. Residues 1073-1105 (MYPPPPQQQPPPPPPADGVPPPPAPGPPASAAP) show a composition bias toward pro residues.

This sequence belongs to the SMARCC family. As to quaternary structure, component of the multiprotein chromatin-remodeling complexes SWI/SNF: SWI/SNF-A (BAF), SWI/SNF-B (PBAF) and related complexes. The canonical complex contains a catalytic subunit (either SMARCA4/BRG1/BAF190A or SMARCA2/BRM/BAF190B) and at least SMARCE1, ACTL6A/BAF53, SMARCC1/BAF155, SMARCC2/BAF170, and SMARCB1/SNF5/BAF47. Other subunits specific to each of the complexes may also be present permitting several possible combinations developmentally and tissue specific. Component of the BAF complex, which includes at least actin (ACTB), ARID1A/BAF250A, ARID1B/BAF250B, SMARCA2/BRM, SMARCA4/BRG1, ACTL6A/BAF53, ACTL6B/BAF53B, SMARCE1/BAF57, SMARCC1/BAF155, SMARCC2/BAF170, SMARCB1/SNF5/INI1, and one or more SMARCD1/BAF60A, SMARCD2/BAF60B, or SMARCD3/BAF60C. In muscle cells, the BAF complex also contains DPF3. Component of neural progenitors-specific chromatin remodeling complex (npBAF complex) composed of at least, ARID1A/BAF250A or ARID1B/BAF250B, SMARCD1/BAF60A, SMARCD3/BAF60C, SMARCA2/BRM/BAF190B, SMARCA4/BRG1/BAF190A, SMARCB1/BAF47, SMARCC1/BAF155, SMARCE1/BAF57, SMARCC2/BAF170, PHF10/BAF45A, ACTL6A/BAF53A and actin. Component of neuron-specific chromatin remodeling complex (nBAF complex) composed of at least, ARID1A/BAF250A or ARID1B/BAF250B, SMARCD1/BAF60A, SMARCD3/BAF60C, SMARCA2/BRM/BAF190B, SMARCA4/BRG1/BAF190A, SMARCB1/BAF47, SMARCC1/BAF155, SMARCE1/BAF57, SMARCC2/BAF170, DPF1/BAF45B, DPF3/BAF45C, ACTL6B/BAF53B and actin. Component of the SWI/SNF-B (PBAF) chromatin remodeling complex, at least composed of SMARCA4/BRG1, SMARCB1/BAF47/SNF5, ACTL6A/BAF53A or ACTL6B/BAF53B, SMARCE1/BAF57, SMARCD1/BAF60A, SMARCD2/BAF60B, perhaps SMARCD3/BAF60C, SMARCC1/BAF155, SMARCC2/BAF170, PBRM1/BAF180, ARID2/BAF200 and actin. Component of SWI/SNF (GBAF) subcomplex, which includes at least BICRA or BICRAL (mutually exclusive), BRD9, SS18, SMARCA2/BRM, SMARCA4/BRG1/BAF190A, ACTL6A/BAF53, SMARCC1/BAF155, and SMARCD1/BAF60A. May also interact with the SIN3A histone deacetylase transcription repressor complex in conjunction with SMARCA2 and SMARCA4. The minimal complex composed of SMARCC1 and SMARCA4 seems to be able to associate with cyclin such as CCNE1 or transcription factors such as KLF1 or GATA1. Interacts with NR3C1 and SMARD1. Interacts with TRIP12; leading to disrupt interaction between TRIP12 and SMARCE1 and prevent SMARCE1 ubiquitination. Interacts with CEBPB (when not methylated). Interacts with KDM6B. Interacts with MKKS; the interaction takes place predominantly in the cytoplasm and may modulate SMARCC1 location. Interacts with DPF2. Interacts with PRDM1/BLIMP1. Interacts with DPF3a (isoform 2 of DPF3/BAF45C) and with HDGFL2 in a DPF3a-dependent manner. In terms of processing, phosphorylated on undefined residues at the G2/M transition by ERK1 and other kinases. This may contribute to cell cycle specific inactivation of remodeling complexes containing the phosphorylated protein. Expressed in brain, heart, muscle, placenta, lung, liver, muscle, kidney and pancreas.

The protein localises to the nucleus. It localises to the cytoplasm. Its function is as follows. Involved in transcriptional activation and repression of select genes by chromatin remodeling (alteration of DNA-nucleosome topology). Component of SWI/SNF chromatin remodeling complexes that carry out key enzymatic activities, changing chromatin structure by altering DNA-histone contacts within a nucleosome in an ATP-dependent manner. May stimulate the ATPase activity of the catalytic subunit of the complex. Belongs to the neural progenitors-specific chromatin remodeling complex (npBAF complex) and the neuron-specific chromatin remodeling complex (nBAF complex). During neural development a switch from a stem/progenitor to a postmitotic chromatin remodeling mechanism occurs as neurons exit the cell cycle and become committed to their adult state. The transition from proliferating neural stem/progenitor cells to postmitotic neurons requires a switch in subunit composition of the npBAF and nBAF complexes. As neural progenitors exit mitosis and differentiate into neurons, npBAF complexes which contain ACTL6A/BAF53A and PHF10/BAF45A, are exchanged for homologous alternative ACTL6B/BAF53B and DPF1/BAF45B or DPF3/BAF45C subunits in neuron-specific complexes (nBAF). The npBAF complex is essential for the self-renewal/proliferative capacity of the multipotent neural stem cells. The nBAF complex along with CREST plays a role regulating the activity of genes essential for dendrite growth. The sequence is that of SWI/SNF complex subunit SMARCC1 from Homo sapiens (Human).